Reading from the N-terminus, the 268-residue chain is 14-3-3-like protein GF14 iota (268 aa).

Phosphoserine is present on residues Ser70 and Ser193. Thr214 bears the Phosphothreonine mark. Positions 240-268 (DLPEDGGEDNIKTEESKQEQAKPADATEN) are disordered. Basic and acidic residues predominate over residues 248 to 261 (DNIKTEESKQEQAK).

It belongs to the 14-3-3 family. Expressed in flowers.

Its subcellular location is the nucleus. The protein resides in the cytoplasm. Is associated with a DNA binding complex that binds to the G box, a well-characterized cis-acting DNA regulatory element found in plant genes. The polypeptide is 14-3-3-like protein GF14 iota (Arabidopsis thaliana (Mouse-ear cress)).